We begin with the raw amino-acid sequence, 408 residues long: Argininosuccinate synthase (408 aa).

ATP-binding positions include 8 to 16 and A35; that span reads AYSGGLDTT. Y86 and S91 together coordinate L-citrulline. G116 lines the ATP pocket. Residues T118, N122, and D123 each coordinate L-aspartate. Residue N122 participates in L-citrulline binding. Positions 126, 177, 186, 263, and 275 each coordinate L-citrulline.

Belongs to the argininosuccinate synthase family. Type 1 subfamily. As to quaternary structure, homotetramer.

It localises to the cytoplasm. It carries out the reaction L-citrulline + L-aspartate + ATP = 2-(N(omega)-L-arginino)succinate + AMP + diphosphate + H(+). It functions in the pathway amino-acid biosynthesis; L-arginine biosynthesis; L-arginine from L-ornithine and carbamoyl phosphate: step 2/3. This is Argininosuccinate synthase from Lachnospira eligens (strain ATCC 27750 / DSM 3376 / VPI C15-48 / C15-B4) (Eubacterium eligens).